The following is a 167-amino-acid chain: MDLKTTVLHITDSFTDEEMYCLLFLINGCIPRSCNAVNISDLIIETLSKSTQWDICLMQCLYVLRKIGLLLNLFQVTKEAVKQSFFTQPQLETHVLTLVNVNNNLTAKDEKRLCFILDQFFPRNVAAPSVILCVFSNMLCEMHVLECLCQLKKCLKQIGRSDLAKTV.

DED domains are found at residues 2-75 (DLKT…NLFQ) and 93-167 (THVL…AKTV).

This is an uncharacterized protein from Saimiriine herpesvirus 2 (strain 11) (SaHV-2).